Here is a 498-residue protein sequence, read N- to C-terminus: Angiopoietin-1 (498 aa).

Residues 1–19 (MTVFLSFAFFAAILTHIGC) form the signal peptide. Positions 81 to 119 (QKLQHLEHVMENYTQWLQKLENYIVENMKSEMAQIQQNA) form a coiled coil. 5 N-linked (GlcNAc...) asparagine glycosylation sites follow: Asn-92, Asn-122, Asn-154, Asn-243, and Asn-295. Residues 153–261 (LNQTSRLEIQ…LELMDTVHNL (109 aa)) adopt a coiled-coil conformation. Residues 277-497 (REEEKPFRDC…STTMMIRPLD (221 aa)) enclose the Fibrinogen C-terminal domain. Cystine bridges form between Cys-286/Cys-315 and Cys-439/Cys-452.

As to quaternary structure, homooligomer. Interacts with TEK/TIE2. Interacts with SVEP1/polydom. Interacts with THBD; this interaction significantly inhibits the generation of activated PC and TAFIa/CPB2 by the thrombin/thrombomodulin complex.

The protein resides in the secreted. Binds and activates TEK/TIE2 receptor by inducing its dimerization and tyrosine phosphorylation. Plays an important role in the regulation of angiogenesis, endothelial cell survival, proliferation, migration, adhesion and cell spreading, reorganization of the actin cytoskeleton, but also maintenance of vascular quiescence. Required for normal angiogenesis and heart development during embryogenesis. After birth, activates or inhibits angiogenesis, depending on the context. Inhibits angiogenesis and promotes vascular stability in quiescent vessels, where endothelial cells have tight contacts. In quiescent vessels, ANGPT1 oligomers recruit TEK to cell-cell contacts, forming complexes with TEK molecules from adjoining cells, and this leads to preferential activation of phosphatidylinositol 3-kinase and the AKT1 signaling cascades. In migrating endothelial cells that lack cell-cell adhesions, ANGT1 recruits TEK to contacts with the extracellular matrix, leading to the formation of focal adhesion complexes, activation of PTK2/FAK and of the downstream kinases MAPK1/ERK2 and MAPK3/ERK1, and ultimately to the stimulation of sprouting angiogenesis. Mediates blood vessel maturation/stability. Implicated in endothelial developmental processes later and distinct from that of VEGF. Appears to play a crucial role in mediating reciprocal interactions between the endothelium and surrounding matrix and mesenchyme. In Mus musculus (Mouse), this protein is Angiopoietin-1 (Angpt1).